The chain runs to 160 residues: MTNTKGKRRGTRYMFSRPFRKHGVVPLATYMRIYKKGDIVDIKGMGTVQKGMPHKCYHGKTGRVYNVTQHAVGIVVNKQVKGKILAKRINVRIEHIKHSKSRDSFLKRVKENDQKKKEAKEKGTWVQLKRQPAPPREAHFVRTNGKEPELLEPIPYEFMA.

Basic and acidic residues-rich tracts occupy residues 112–123 and 136–145; these read NDQKKKEAKEKG and REAHFVRTNG. Positions 112–145 are disordered; sequence NDQKKKEAKEKGTWVQLKRQPAPPREAHFVRTNG.

It belongs to the eukaryotic ribosomal protein eL21 family. As to quaternary structure, component of the large ribosomal subunit.

It is found in the cytoplasm. Its subcellular location is the cytosol. The protein resides in the endoplasmic reticulum. In terms of biological role, component of the large ribosomal subunit. The ribosome is a large ribonucleoprotein complex responsible for the synthesis of proteins in the cell. In Oryctolagus cuniculus (Rabbit), this protein is Large ribosomal subunit protein eL21 (RPL21).